Reading from the N-terminus, the 120-residue chain is Insoluble matrix shell protein 2 (120 aa).

A signal peptide spans 1–20; sequence MHQSSLGVLVLFSLIYLCIS.

In terms of tissue distribution, component of the acid-insoluble organic matrix of the calcified shell.

The protein resides in the secreted. The chain is Insoluble matrix shell protein 2 from Ruditapes philippinarum (Japanese carpet shell).